Consider the following 337-residue polypeptide: AVSASPVLTLPNDIQVQENFDLSRIYGKWFHVAVGSTCPWLKRFKDKMTMGTLMLGEGATEREISVTKTHRRKGICEVISGAYEKTSTDGKFLYHKSKWNITMESYVVHTNYDEYAIFLTKKFSRRHGPTLTAKLYGREPQLRESLLEEFREVALGVGIPEDSIFTMPDRGECVPGEQEPEPTLLSRARRAVLPQEEEGSGAGQPVADFSKKEDSCQLGYSQGPCLGMIKRYFYNGSSMACETFHYGGCMGNGNNFVSEKECLQTCRTVEACSLPIVSGPCRGFFQLWAFDAVQGKCVLFNYGGCQGNGNQFYSEKECKEYCGVPGEEDEELLRSSN.

A signal peptide spans 1–4 (AVSA). The 3-hydroxy-L-kynurenine site is built by cysteine 38 and lysine 96. Cysteine 76 and cysteine 173 are joined by a disulfide. Asparagine 100 is a glycosylation site (N-linked (GlcNAc...) asparagine). Positions 122 and 134 each coordinate 3-hydroxy-L-kynurenine. Serine 200 carries an O-linked (Xyl...) (chondroitin sulfate) serine glycan. Intrachain disulfides connect cysteine 216-cysteine 266, cysteine 225-cysteine 249, cysteine 241-cysteine 262, cysteine 272-cysteine 322, cysteine 281-cysteine 305, and cysteine 297-cysteine 318. 2 BPTI/Kunitz inhibitor domains span residues 216 to 266 (CQLG…LQTC) and 272 to 322 (CSLP…KEYC). An N-linked (GlcNAc...) asparagine glycan is attached at asparagine 235.

This sequence in the N-terminal section; belongs to the calycin superfamily. Lipocalin family. As to quaternary structure, monomer. Homodimer. In plasma, it occurs as a monomer or dimer and in covalently-linked complexes with immunoglobulin A (IgA), ALB/albumin and F2/prothrombin. Chromophore-bound alpha-1-microglobulin interacts with the constant region of immunoglobulin A. Chromophore-bound alpha-1-microglobulin interacts with ALB with molar ratio 2:1 and 1:1; this interaction does not prevent fatty acid binding to ALB. Interacts with F2/prothrombin (via N-terminus) with molar ratio 2:1 and 1:1; this interaction does not prevent the activation of prothrombin to thrombin. Interacts with NDUFAB1, a subunit of mitochondrial complex I. Interacts with FN1. In terms of assembly, I-alpha-I plasma protease inhibitors are assembled from one or two heavy chains (HC) and one light chain, bikunin. Inter-alpha-inhibitor (I-alpha-I) is composed of ITIH1/HC1, ITIH2/HC2 and bikunin, and pre-alpha-inhibitor (P-alpha-I) of ITIH3/HC3 and bikunin. Interacts with TNFAIP6 (via Link domain). Monomer. Also occurs as a complex with tryptase in mast cells. Post-translationally, the precursor is proteolytically processed into separately functioning proteins. Proteolytically cleaved in the presence of oxyhemoglobin or MPO. In terms of processing, 3-hydroxykynurenine, an oxidized tryptophan metabolite that is common in biological fluids, reacts with Cys-53, Lys-111, Lys-137, and Lys-149 to form heterogeneous polycyclic chromophores including hydroxanthommatin. The reaction by alpha-1-microglobulin is autocatalytic; the human protein forms chromophore even when expressed in insect and bacterial cells. The chromophore can react with accessible cysteines forming non-reducible thioether cross-links with other molecules of alpha-1-microglobulin or with other proteins such as Ig alpha-1 chain C region 'Cys-352'. Post-translationally, heavy chains are interlinked with bikunin via a chondroitin 4-sulfate bridge to the C-terminal aspartate. Proteolytically cleaved by PRSS3 at Kunitz domain 2. In terms of tissue distribution, expressed by the liver and secreted in plasma.

Its subcellular location is the secreted. It is found in the endoplasmic reticulum. The protein resides in the cytoplasm. The protein localises to the cytosol. It localises to the cell membrane. Its subcellular location is the nucleus membrane. It is found in the mitochondrion inner membrane. The protein resides in the extracellular space. The protein localises to the extracellular matrix. Antioxidant and tissue repair protein with reductase, heme-binding and radical-scavenging activities. Removes and protects against harmful oxidants and repairs macromolecules in intravascular and extravascular spaces and in intracellular compartments. Intravascularly, plays a regulatory role in red cell homeostasis by preventing heme- and reactive oxygen species-induced cell damage. Binds and degrades free heme to protect fetal and adult red blood cells from hemolysis. Reduces extracellular methemoglobin, a Fe3+ (ferric) form of hemoglobin that cannot bind oxygen, back to the Fe2+ (ferrous) form deoxyhemoglobin, which has oxygen-carrying potential. Upon acute inflammation, inhibits oxidation of low-density lipoprotein particles by MPO and limits vascular damage. Extravascularly, protects from oxidation products formed on extracellular matrix structures and cell membranes. Catalyzes the reduction of carbonyl groups on oxidized collagen fibers and preserves cellular and extracellular matrix ultrastructures. Importantly, counteracts the oxidative damage at blood-placenta interface, preventing leakage of free fetal hemoglobin into the maternal circulation. Intracellularly, has a role in maintaining mitochondrial redox homeostasis. Bound to complex I of the respiratory chain of mitochondria, may scavenge free radicals and preserve mitochondrial ATP synthesis. Protects renal tubule epithelial cells from heme-induced oxidative damage to mitochondria. Reduces cytochrome c from Fe3+ (ferric) to the Fe2+ (ferrous) state through formation of superoxide anion radicals in the presence of ascorbate or NADH/NADPH electron donor cofactors, ascorbate being the preferred cofactor. Has a chaperone role in facilitating the correct folding of bikunin in the endoplasmic reticulum compartment. Functionally, kunitz-type serine protease inhibitor and structural component of extracellular matrix with a role in extracellular space remodeling and cell adhesion. Among others, has antiprotease activity toward kallikrein, a protease involved in airway inflammation; inhibits GZMK/granzyme, a granule-stored serine protease involved in NK and T cell cytotoxic responses; and inhibits PLG/plasmin, a protease required for activation of matrix metalloproteinases. As part of I-alpha-I complex, provides for the heavy chains to be transferred from I-alpha-I complex to hyaluronan in the presence of TNFAIP6, in a dynamic process that releases free bikunin and remodels extracellular matrix proteoglycan structures. Free bikunin, but not its heavy chain-bound form, acts as a potent protease inhibitor in airway secretions. Part of hyaluronan-rich extracellular matrix that surrounds oocyte during cumulus oophorus expansion, an indispensable process for proper ovulation. Also inhibits calcium oxalate crystallization. Its function is as follows. Kunitz-type serine protease inhibitor. Has high catalytic efficiency for F10/blood coagulation factor Xa and may act as an anticoagulant by inhibiting prothrombin activation. Inhibits trypsin and mast cell CMA1/chymase and tryptase proteases. This chain is Protein AMBP (AMBP), found in Sus scrofa (Pig).